A 361-amino-acid polypeptide reads, in one-letter code: Queuine tRNA-ribosyltransferase (361 aa).

The active-site Proton acceptor is Asp89. Residues 89–93 (DSGGF), Asp143, Gln185, and Gly212 each bind substrate. The RNA binding stretch occupies residues 243 to 249 (GVGTPED). The active-site Nucleophile is the Asp262. Residues 267–271 (TRNAR) form an RNA binding; important for wobble base 34 recognition region. Zn(2+)-binding residues include Cys300, Cys302, Cys305, and His331.

It belongs to the queuine tRNA-ribosyltransferase family. In terms of assembly, homodimer. Within each dimer, one monomer is responsible for RNA recognition and catalysis, while the other monomer binds to the replacement base PreQ1. The cofactor is Zn(2+).

It catalyses the reaction 7-aminomethyl-7-carbaguanine + guanosine(34) in tRNA = 7-aminomethyl-7-carbaguanosine(34) in tRNA + guanine. It functions in the pathway tRNA modification; tRNA-queuosine biosynthesis. Functionally, catalyzes the base-exchange of a guanine (G) residue with the queuine precursor 7-aminomethyl-7-deazaguanine (PreQ1) at position 34 (anticodon wobble position) in tRNAs with GU(N) anticodons (tRNA-Asp, -Asn, -His and -Tyr). Catalysis occurs through a double-displacement mechanism. The nucleophile active site attacks the C1' of nucleotide 34 to detach the guanine base from the RNA, forming a covalent enzyme-RNA intermediate. The proton acceptor active site deprotonates the incoming PreQ1, allowing a nucleophilic attack on the C1' of the ribose to form the product. After dissociation, two additional enzymatic reactions on the tRNA convert PreQ1 to queuine (Q), resulting in the hypermodified nucleoside queuosine (7-(((4,5-cis-dihydroxy-2-cyclopenten-1-yl)amino)methyl)-7-deazaguanosine). This is Queuine tRNA-ribosyltransferase from Nitrosomonas eutropha (strain DSM 101675 / C91 / Nm57).